A 776-amino-acid polypeptide reads, in one-letter code: Lon protease (776 aa).

Residues 12-209 (LPIIALRGLW…LVYKFVIKEI (198 aa)) enclose the Lon N-terminal domain. An ATP-binding site is contributed by 360–367 (GPPGVGKT). Residues 596-776 (EDTVGVVNGL…VKEILDEVLI (181 aa)) enclose the Lon proteolytic domain. Residues serine 683 and lysine 726 contribute to the active site.

This sequence belongs to the peptidase S16 family. Homohexamer. Organized in a ring with a central cavity.

It is found in the cytoplasm. It catalyses the reaction Hydrolysis of proteins in presence of ATP.. Its function is as follows. ATP-dependent serine protease that mediates the selective degradation of mutant and abnormal proteins as well as certain short-lived regulatory proteins. Required for cellular homeostasis and for survival from DNA damage and developmental changes induced by stress. Degrades polypeptides processively to yield small peptide fragments that are 5 to 10 amino acids long. Binds to DNA in a double-stranded, site-specific manner. This Finegoldia magna (strain ATCC 29328 / DSM 20472 / WAL 2508) (Peptostreptococcus magnus) protein is Lon protease.